The chain runs to 314 residues: tRNA dimethylallyltransferase 2 (314 aa).

8 to 15 (GPTGSGKS) is a binding site for ATP. Residue 10 to 15 (TGSGKS) coordinates substrate.

It belongs to the IPP transferase family. Monomer. Mg(2+) serves as cofactor.

The enzyme catalyses adenosine(37) in tRNA + dimethylallyl diphosphate = N(6)-dimethylallyladenosine(37) in tRNA + diphosphate. Functionally, catalyzes the transfer of a dimethylallyl group onto the adenine at position 37 in tRNAs that read codons beginning with uridine, leading to the formation of N6-(dimethylallyl)adenosine (i(6)A). This is tRNA dimethylallyltransferase 2 from Mycobacterium marinum (strain ATCC BAA-535 / M).